The chain runs to 451 residues: Exodeoxyribonuclease 7 large subunit (451 aa).

It belongs to the XseA family. In terms of assembly, heterooligomer composed of large and small subunits.

Its subcellular location is the cytoplasm. The enzyme catalyses Exonucleolytic cleavage in either 5'- to 3'- or 3'- to 5'-direction to yield nucleoside 5'-phosphates.. Functionally, bidirectionally degrades single-stranded DNA into large acid-insoluble oligonucleotides, which are then degraded further into small acid-soluble oligonucleotides. In Neisseria meningitidis serogroup A / serotype 4A (strain DSM 15465 / Z2491), this protein is Exodeoxyribonuclease 7 large subunit.